Here is a 578-residue protein sequence, read N- to C-terminus: Protein LIKE EARLY STARVATION, chloroplastic (578 aa).

A chloroplast-targeting transit peptide spans 1-56 (MALRLGVSIGAALGSSHWDDGQRVRQRDFSASVNFTAPVTSRRSLRGSRTGVRILR). Disordered regions lie at residues 146–166 (NNSG…TSEV) and 187–206 (SETS…TPPQ).

The protein belongs to the ESV1 family. As to expression, expressed ubiquitously.

It localises to the plastid. It is found in the chloroplast stroma. In terms of biological role, binds preferentially to highly ordered alpha-glucans, such as starch and crystalline maltodextrins. Involved in the organization of the starch granule matrix, thus influencing starch turnover by modulating the accessibility of starch polymers to modifying and degrading enzymes involved in phosphorylation, hydrolyzes and synthesis, including starch synthases (SSI and SSIII), starch phosphorylases (PHS1), isoamylase, beta-amylase, glucan water dikinase (GWD) and phosphoglucan water dikinase (PWD). The sequence is that of Protein LIKE EARLY STARVATION, chloroplastic from Arabidopsis thaliana (Mouse-ear cress).